Here is a 227-residue protein sequence, read N- to C-terminus: Homeobox protein HD-10 (227 aa).

Residues 30–89 (FVKHRKRTTKAQLKVLEETFETNIRPDANMRKKLGEQLGMTPRSVQVWFQNRRAKIKKLT) constitute a DNA-binding region (homeobox). The interval 88 to 115 (LTQKKMMQQENTDNTKGPDAAHGSSSPK) is disordered. Residues 92–102 (KMMQQENTDNT) are compositionally biased toward polar residues.

It is found in the nucleus. The polypeptide is Homeobox protein HD-10 (HD-10) (Encephalitozoon cuniculi (strain GB-M1) (Microsporidian parasite)).